A 105-amino-acid polypeptide reads, in one-letter code: Malonate decarboxylase acyl carrier protein (105 aa).

Serine 28 is modified (O-(phosphoribosyl dephospho-coenzyme A)serine).

It belongs to the MdcC family. Post-translationally, covalently binds the prosthetic group of malonate decarboxylase.

The protein resides in the cytoplasm. Functionally, subunit of malonate decarboxylase, it is an acyl carrier protein to which acetyl and malonyl thioester residues are bound via a 2'-(5''-phosphoribosyl)-3'-dephospho-CoA prosthetic group and turn over during the catalytic mechanism. The sequence is that of Malonate decarboxylase acyl carrier protein from Xanthomonas axonopodis pv. citri (strain 306).